Reading from the N-terminus, the 1412-residue chain is uncharacterized protein (1412 aa).

Positions 1–22 are disordered; that stretch reads MESINVVNSVEDLPGFNPDENV. 2 coiled-coil regions span residues 317 to 377 and 732 to 800; these read NNDF…ILRH and SKEA…SDDE. The segment at 778 to 808 is disordered; sequence SRKRKHEDIVKEHEAEKRDSDDEDDFEEVDV. Residues 783-797 show a composition bias toward basic and acidic residues; it reads HEDIVKEHEAEKRDS. A compositionally biased stretch (acidic residues) spans 798–808; that stretch reads DDEDDFEEVDV.

This is an uncharacterized protein from Magallana gigas (Pacific oyster).